The chain runs to 124 residues: Small ribosomal subunit protein uS12 (124 aa).

Asp-89 carries the 3-methylthioaspartic acid modification. The interval 103 to 124 (DTAGVKDRRQSRSKYGAKSPKE) is disordered.

Belongs to the universal ribosomal protein uS12 family. In terms of assembly, part of the 30S ribosomal subunit. Contacts proteins S8 and S17. May interact with IF1 in the 30S initiation complex.

In terms of biological role, with S4 and S5 plays an important role in translational accuracy. Interacts with and stabilizes bases of the 16S rRNA that are involved in tRNA selection in the A site and with the mRNA backbone. Located at the interface of the 30S and 50S subunits, it traverses the body of the 30S subunit contacting proteins on the other side and probably holding the rRNA structure together. The combined cluster of proteins S8, S12 and S17 appears to hold together the shoulder and platform of the 30S subunit. The protein is Small ribosomal subunit protein uS12 of Prochlorococcus marinus (strain NATL2A).